We begin with the raw amino-acid sequence, 425 residues long: 2-(3-amino-3-carboxypropyl)histidine synthase subunit 1 (425 aa).

A disordered region spans residues 1-29 (MSGSTESKKQPRRRFIGRKSGNSNNDKLT). The tract at residues 1–60 (MSGSTESKKQPRRRFIGRKSGNSNNDKLTTVAENGNEIIHKQKSRIALGRSVNHVPEDIL) is required for function but dispensable for interaction with DPH2 and DPH3. The segment covering 20–29 (SGNSNNDKLT) has biased composition (polar residues). Serine 44 is subject to Phosphoserine. 3 residues coordinate [4Fe-4S] cluster: cysteine 133, cysteine 239, and cysteine 368. Positions 366-425 (VACPRLSIDWGYAFNKPLLTPYEASVLLKKDVMFSEKYYPMDYYEAKGYGRGETPKHAIE) are required for function but dispensable for interaction with DPH2 and DPH3.

The protein belongs to the DPH1/DPH2 family. DPH1 subfamily. Component of the 2-(3-amino-3-carboxypropyl)histidine synthase complex composed of DPH1, DPH2, KTI11/DPH3 and a NADH-dependent reductase, predominantly CBR1. Interacts with DPH2; the interaction is direct. Interacts with KTI11/DPH3. [4Fe-4S] cluster is required as a cofactor.

Its subcellular location is the cytoplasm. The catalysed reaction is L-histidyl-[translation elongation factor 2] + S-adenosyl-L-methionine = 2-[(3S)-amino-3-carboxypropyl]-L-histidyl-[translation elongation factor 2] + S-methyl-5'-thioadenosine + H(+). Its pathway is protein modification; peptidyl-diphthamide biosynthesis. Functionally, catalyzes the first step of diphthamide biosynthesis, a post-translational modification of histidine which occurs in elongation factor 2. In association with DPH2, transfers a 3-amino-3-carboxypropyl (ACP) group from S-adenosyl-L-methionine (SAM) to a histidine residue, the reaction is assisted by a reduction system comprising KTI11/DPH3 and a NADH-dependent reductase, predominantly CBR1. This is 2-(3-amino-3-carboxypropyl)histidine synthase subunit 1 (DPH1) from Saccharomyces cerevisiae (strain ATCC 204508 / S288c) (Baker's yeast).